The following is a 442-amino-acid chain: O-methyltransferase pgmB (442 aa).

Residue Asp291 participates in S-adenosyl-L-methionine binding. The Proton acceptor role is filled by His341.

It belongs to the class I-like SAM-binding methyltransferase superfamily. Cation-independent O-methyltransferase family.

It functions in the pathway pigment biosynthesis. It participates in secondary metabolite biosynthesis. In terms of biological role, O-methyltransferase; part of the gene cluster that mediates the biosynthesis of pleosporalin A, ascomycone A, as well as a third cryptic naphthoquinone derived pigment, all responsible for the coloration of conidia. Specifically methylates position C-6 of the pgmA product 3-acetonyl-1,6,8-trihydroxy-2-naphthaldehyde to yield fusarubinaldehyde. The pathway begins with the biosynthesis of the cyclized heptaketide 3-acetonyl-1,6,8-trihydroxy-2-naphthaldehyde by the NR-PKS pgmA. The C-6 hydroxyl group is further methylated by the O-methyltransferase pgmB to yield fusarubinaldehyde which is in turn oxidized by the cytochrome P450 monooxygenase pgmC at C-9. The C-1 hydroxyl group is then methylated spontaneously. Although pgmE, pgmD and pgmH are essential for the production of pleosporalin A, it is not the case for the 2 other final products and it remains difficult to assign a specific function to each enzyme. PgmF and pgmG seem not to be involved in pigment biosynthesis although they were regulated by the cluster-specific transcription factor pgmR. This chain is O-methyltransferase pgmB, found in Aspergillus terreus.